Consider the following 902-residue polypeptide: HTH-type transcriptional regulator MalT (902 aa).

39 to 46 (SPAGYGKT) contributes to the ATP binding site. The HTH luxR-type domain maps to 832–897 (ELVRTSPLTQ…EAIVTAENLL (66 aa)). The segment at residues 856–875 (NEQIAQELDVAGTTIKTHIR) is a DNA-binding region (H-T-H motif).

The protein belongs to the MalT family. Monomer in solution. Oligomerizes to an active state in the presence of the positive effectors ATP and maltotriose.

With respect to regulation, activated by ATP and maltotriose, which are both required for DNA binding. Its function is as follows. Positively regulates the transcription of the maltose regulon whose gene products are responsible for uptake and catabolism of malto-oligosaccharides. Specifically binds to the promoter region of its target genes, recognizing a short DNA motif called the MalT box. The protein is HTH-type transcriptional regulator MalT of Vibrio campbellii (strain ATCC BAA-1116).